The following is a 673-amino-acid chain: Bifunctional lycopene cyclase/phytoene synthase (673 aa).

Positions Met-1–His-251 are lycopene beta-cyclase. The next 7 membrane-spanning stretches (helical) occupy residues Ile-9–Leu-29, Lys-36–Ile-56, Tyr-81–Ala-101, Ser-117–Ala-137, Leu-157–Phe-177, Thr-187–Gly-207, and Val-226–Leu-246. The segment at Leu-258–Gln-673 is phytoene synthase. The interval Lys-376–Pro-399 is disordered.

It in the N-terminal section; belongs to the lycopene beta-cyclase family. The protein in the C-terminal section; belongs to the phytoene/squalene synthase family.

It is found in the membrane. It catalyses the reaction all-trans-lycopene = gamma-carotene. It carries out the reaction gamma-carotene = all-trans-beta-carotene. The enzyme catalyses 2 (2E,6E,10E)-geranylgeranyl diphosphate = 15-cis-phytoene + 2 diphosphate. It functions in the pathway carotenoid biosynthesis; beta-carotene biosynthesis. Its pathway is carotenoid biosynthesis; phytoene biosynthesis; all-trans-phytoene from geranylgeranyl diphosphate: step 1/1. In terms of biological role, bifunctional enzyme that catalyzes the reactions from geranylgeranyl diphosphate to phytoene (phytoene synthase) and lycopene to beta-carotene via the intermediate gamma-carotene (lycopene cyclase). The cyclase preferentially catalyzes the symmetric cyclization of both ends of the substrate to produce dicyclic carotenoids. Beta-carotene is further processed to the acidic carotenoid astaxanthin. The polypeptide is Bifunctional lycopene cyclase/phytoene synthase (Phaffia rhodozyma (Yeast)).